Consider the following 198-residue polypeptide: Heat shock 70 kDa protein (198 aa).

A compositionally biased stretch (gly residues) spans 170–191; sequence GGGVPSGMPGGMPGAGGGGGKG. The disordered stretch occupies residues 170–198; that stretch reads GGGVPSGMPGGMPGAGGGGGKGPTIEEVD.

The protein belongs to the heat shock protein 70 family.

The sequence is that of Heat shock 70 kDa protein from Schistosoma japonicum (Blood fluke).